Consider the following 85-residue polypeptide: Kunitz-type serine protease inhibitor homolog beta-bungarotoxin B2 chain (85 aa).

Positions 1–24 are cleaved as a signal peptide; the sequence is MSSGGLLLLLGLLTLCAELTPVSS. One can recognise a BPTI/Kunitz inhibitor domain in the interval 31-81; that stretch reads CDKPPDTKICQTVVRAFYYKPSAKRCVQFRYGGCNGNGNHFKSDHLCRCEC. 3 disulfide bridges follow: Cys-31–Cys-81, Cys-40–Cys-64, and Cys-56–Cys-77.

The protein belongs to the venom Kunitz-type family. Heterodimer; disulfide-linked. The A chains have phospholipase A2 activity and the B chains show homology with the basic protease inhibitors. In terms of tissue distribution, expressed by the venom gland.

It is found in the secreted. Its function is as follows. Beta-2-bungarotoxin is a presynaptic neurotoxin of the venom. The B chain is homologous to venom basic protease inhibitors but has no protease inhibitor activity and blocks voltage-gated potassium channels (Kv). In Bungarus multicinctus (Many-banded krait), this protein is Kunitz-type serine protease inhibitor homolog beta-bungarotoxin B2 chain.